The following is a 204-amino-acid chain: Thioredoxin-like 4, chloroplastic (204 aa).

The N-terminal 27 residues, 1 to 27 (MSSLLNISHCSYHGYSGLTSRGGINTV), are a transit peptide targeting the chloroplast. Positions 63–201 (AKSLSQENLV…IDAAILKYTS (139 aa)) constitute a Thioredoxin domain. Active-site nucleophile residues include Cys-119 and Cys-122. Cys-119 and Cys-122 are oxidised to a cystine.

This sequence belongs to the thioredoxin family.

The protein localises to the plastid. The protein resides in the chloroplast. Functionally, probable thiol-disulfide oxidoreductase that may participate in various redox reactions. This is Thioredoxin-like 4, chloroplastic from Arabidopsis thaliana (Mouse-ear cress).